We begin with the raw amino-acid sequence, 623 residues long: Lamin-B2.L (623 aa).

Low complexity predominate over residues 1-18; sequence MATTTPSRSTRSSMQSPA. The segment at 1 to 30 is disordered; it reads MATTTPSRSTRSSMQSPARGTSTPLSPTRI. The interval 2-27 is head; that stretch reads ATTTPSRSTRSSMQSPARGTSTPLSP. The span at 19–30 shows a compositional bias: polar residues; that stretch reads RGTSTPLSPTRI. Ser26 bears the Phosphoserine mark. Residues 28 to 64 form a coil 1A region; the sequence is TRISRLQEKEELRHLNDRLAVYIDRVRALELENDRLM. The 357-residue stretch at 35–391 folds into the IF rod domain; the sequence is EKEELRHLND…KLLEGEEERL (357 aa). The interval 64–74 is linker 1; it reads MVKISEKEEVT. The tract at residues 75 to 211 is coil 1B; it reads TREVSGIKNL…QSLQEEMDFR (137 aa). The segment at 212–235 is linker 2; sequence KNIYEEESRETRKRHERRIVEVDR. The segment at 236–378 is coil 2; it reads GHHYDYESKL…VKLALDLEIN (143 aa). A tail region spans residues 380–592; sequence YRKLLEGEEE…VTKSVLRNVE (213 aa). Disordered regions lie at residues 388–473 and 591–623; these read EERL…LSQQ and VEEE…CSVM. Ser396 carries the post-translational modification Phosphoserine. The span at 398 to 416 shows a compositional bias: low complexity; that stretch reads ESRVTVSRATSSSSSATRT. The Nuclear localization signal motif lies at 420 to 425; it reads KRRRVE. Residues 443–473 show a composition bias toward polar residues; the sequence is LGSSRITASEGSSRTITSGQSSTTRFHLSQQ. Residues 468–585 enclose the LTD domain; that stretch reads FHLSQQASAT…EEVAVRTVTK (118 aa). Residues 592–604 are compositionally biased toward acidic residues; sequence EEEEDEDADFGEE. Positions 612–623 are enriched in polar residues; sequence DPRTTSRGCSVM. Cys620 bears the Cysteine methyl ester mark. Cys620 carries S-farnesyl cysteine lipidation. Residues 621 to 623 constitute a propeptide, removed in mature form; sequence SVM.

This sequence belongs to the intermediate filament family. Post-translationally, phosphorylation plays a key role in lamin organization, subcellular localization and nuclear envelope disintegration. Phosphorylation by CDK1 at Ser-26 at the onset of mitosis drives lamin disassembly and nuclear envelope breakdown.

The protein resides in the nucleus lamina. It localises to the nucleus envelope. It is found in the nucleus. Its subcellular location is the nucleoplasm. The protein localises to the nucleus matrix. Functionally, lamins are intermediate filament proteins that assemble into a filamentous meshwork, and which constitute the major components of the nuclear lamina, a fibrous layer on the nucleoplasmic side of the inner nuclear membrane. Lamins provide a framework for the nuclear envelope, bridging the nuclear envelope and chromatin, thereby playing an important role in nuclear assembly, chromatin organization, nuclear membrane and telomere dynamics. The structural integrity of the lamina is strictly controlled by the cell cycle, as seen by the disintegration and formation of the nuclear envelope in prophase and telophase, respectively. The polypeptide is Lamin-B2.L (lmnb2.L) (Xenopus laevis (African clawed frog)).